A 258-amino-acid chain; its full sequence is Tryptophan synthase alpha chain (258 aa).

Catalysis depends on proton acceptor residues Glu-47 and Asp-58.

Belongs to the TrpA family. As to quaternary structure, tetramer of two alpha and two beta chains.

It carries out the reaction (1S,2R)-1-C-(indol-3-yl)glycerol 3-phosphate + L-serine = D-glyceraldehyde 3-phosphate + L-tryptophan + H2O. It participates in amino-acid biosynthesis; L-tryptophan biosynthesis; L-tryptophan from chorismate: step 5/5. The alpha subunit is responsible for the aldol cleavage of indoleglycerol phosphate to indole and glyceraldehyde 3-phosphate. The sequence is that of Tryptophan synthase alpha chain from Bacillus cereus (strain G9842).